The primary structure comprises 94 residues: Co-chaperonin GroES (94 aa).

Belongs to the GroES chaperonin family. As to quaternary structure, heptamer of 7 subunits arranged in a ring. Interacts with the chaperonin GroEL.

Its subcellular location is the cytoplasm. Together with the chaperonin GroEL, plays an essential role in assisting protein folding. The GroEL-GroES system forms a nano-cage that allows encapsulation of the non-native substrate proteins and provides a physical environment optimized to promote and accelerate protein folding. GroES binds to the apical surface of the GroEL ring, thereby capping the opening of the GroEL channel. This is Co-chaperonin GroES from Staphylococcus carnosus (strain TM300).